A 145-amino-acid polypeptide reads, in one-letter code: UPF0735 ACT domain-containing protein CLL_A2896 (145 aa).

The 76-residue stretch at 69–144 folds into the ACT domain; it reads TFNLIVKDQT…YVEKIEFVAM (76 aa).

It belongs to the UPF0735 family.

The protein is UPF0735 ACT domain-containing protein CLL_A2896 of Clostridium botulinum (strain Eklund 17B / Type B).